A 355-amino-acid chain; its full sequence is UDP-N-acetylglucosamine--N-acetylmuramyl-(pentapeptide) pyrophosphoryl-undecaprenol N-acetylglucosamine transferase (355 aa).

UDP-N-acetyl-alpha-D-glucosamine-binding positions include 13–15, asparagine 125, arginine 162, serine 190, isoleucine 244, and glutamine 289; that span reads TGG.

It belongs to the glycosyltransferase 28 family. MurG subfamily.

The protein localises to the cell inner membrane. It carries out the reaction di-trans,octa-cis-undecaprenyl diphospho-N-acetyl-alpha-D-muramoyl-L-alanyl-D-glutamyl-meso-2,6-diaminopimeloyl-D-alanyl-D-alanine + UDP-N-acetyl-alpha-D-glucosamine = di-trans,octa-cis-undecaprenyl diphospho-[N-acetyl-alpha-D-glucosaminyl-(1-&gt;4)]-N-acetyl-alpha-D-muramoyl-L-alanyl-D-glutamyl-meso-2,6-diaminopimeloyl-D-alanyl-D-alanine + UDP + H(+). The protein operates within cell wall biogenesis; peptidoglycan biosynthesis. Functionally, cell wall formation. Catalyzes the transfer of a GlcNAc subunit on undecaprenyl-pyrophosphoryl-MurNAc-pentapeptide (lipid intermediate I) to form undecaprenyl-pyrophosphoryl-MurNAc-(pentapeptide)GlcNAc (lipid intermediate II). The protein is UDP-N-acetylglucosamine--N-acetylmuramyl-(pentapeptide) pyrophosphoryl-undecaprenol N-acetylglucosamine transferase of Neisseria gonorrhoeae (strain ATCC 700825 / FA 1090).